Here is a 693-residue protein sequence, read N- to C-terminus: Phosphoribosylformylglycinamidine synthase subunit PurL (693 aa).

His34 is a catalytic residue. ATP contacts are provided by Tyr37 and Lys76. Position 78 (Glu78) interacts with Mg(2+). Residues 79–82 and Arg101 contribute to the substrate site; that span reads SHNH. Residue His80 is the Proton acceptor of the active site. Asp102 contributes to the Mg(2+) binding site. Gln222 lines the substrate pocket. Mg(2+) is bound at residue Asp248. Position 292-294 (292-294) interacts with substrate; it reads ETQ. ATP contacts are provided by Asp470 and Gly507. Ser510 is a binding site for substrate.

It belongs to the FGAMS family. Monomer. Part of the FGAM synthase complex composed of 1 PurL, 1 PurQ and 2 PurS subunits.

Its subcellular location is the cytoplasm. The enzyme catalyses N(2)-formyl-N(1)-(5-phospho-beta-D-ribosyl)glycinamide + L-glutamine + ATP + H2O = 2-formamido-N(1)-(5-O-phospho-beta-D-ribosyl)acetamidine + L-glutamate + ADP + phosphate + H(+). It participates in purine metabolism; IMP biosynthesis via de novo pathway; 5-amino-1-(5-phospho-D-ribosyl)imidazole from N(2)-formyl-N(1)-(5-phospho-D-ribosyl)glycinamide: step 1/2. Its function is as follows. Part of the phosphoribosylformylglycinamidine synthase complex involved in the purines biosynthetic pathway. Catalyzes the ATP-dependent conversion of formylglycinamide ribonucleotide (FGAR) and glutamine to yield formylglycinamidine ribonucleotide (FGAM) and glutamate. The FGAM synthase complex is composed of three subunits. PurQ produces an ammonia molecule by converting glutamine to glutamate. PurL transfers the ammonia molecule to FGAR to form FGAM in an ATP-dependent manner. PurS interacts with PurQ and PurL and is thought to assist in the transfer of the ammonia molecule from PurQ to PurL. This is Phosphoribosylformylglycinamidine synthase subunit PurL from Pyrobaculum neutrophilum (strain DSM 2338 / JCM 9278 / NBRC 100436 / V24Sta) (Thermoproteus neutrophilus).